Consider the following 354-residue polypeptide: Chorismate synthase (354 aa).

Residue Arg-46 participates in NADP(+) binding. FMN is bound by residues 123–125 (RVS), 233–234 (NG), Gly-273, 288–292 (KPTPS), and Arg-314.

This sequence belongs to the chorismate synthase family. In terms of assembly, homotetramer. Requires FMNH2 as cofactor.

It carries out the reaction 5-O-(1-carboxyvinyl)-3-phosphoshikimate = chorismate + phosphate. The protein operates within metabolic intermediate biosynthesis; chorismate biosynthesis; chorismate from D-erythrose 4-phosphate and phosphoenolpyruvate: step 7/7. Functionally, catalyzes the anti-1,4-elimination of the C-3 phosphate and the C-6 proR hydrogen from 5-enolpyruvylshikimate-3-phosphate (EPSP) to yield chorismate, which is the branch point compound that serves as the starting substrate for the three terminal pathways of aromatic amino acid biosynthesis. This reaction introduces a second double bond into the aromatic ring system. This is Chorismate synthase from Campylobacter curvus (strain 525.92).